Reading from the N-terminus, the 165-residue chain is Cell division protein SepF (165 aa).

Residues 23–75 are disordered; that stretch reads DEYGDYAGDYETQETAPVATRSSKRESRPAPVSDLSERRRPASGPTGVVAELS.

The protein belongs to the SepF family. In terms of assembly, homodimer. Interacts with FtsZ.

Its subcellular location is the cytoplasm. In terms of biological role, cell division protein that is part of the divisome complex and is recruited early to the Z-ring. Probably stimulates Z-ring formation, perhaps through the cross-linking of FtsZ protofilaments. Its function overlaps with FtsA. The protein is Cell division protein SepF of Nocardioides sp. (strain ATCC BAA-499 / JS614).